The sequence spans 357 residues: Biotin synthase (357 aa).

The region spanning 41 to 268 (NEVQISRLLS…KSRVRLSAGR (228 aa)) is the Radical SAM core domain. 3 residues coordinate [4Fe-4S] cluster: Cys-56, Cys-60, and Cys-63. [2Fe-2S] cluster is bound by residues Cys-100, Cys-131, Cys-191, and Arg-263.

The protein belongs to the radical SAM superfamily. Biotin synthase family. In terms of assembly, homodimer. It depends on [4Fe-4S] cluster as a cofactor. [2Fe-2S] cluster is required as a cofactor.

The enzyme catalyses (4R,5S)-dethiobiotin + (sulfur carrier)-SH + 2 reduced [2Fe-2S]-[ferredoxin] + 2 S-adenosyl-L-methionine = (sulfur carrier)-H + biotin + 2 5'-deoxyadenosine + 2 L-methionine + 2 oxidized [2Fe-2S]-[ferredoxin]. Its pathway is cofactor biosynthesis; biotin biosynthesis; biotin from 7,8-diaminononanoate: step 2/2. In terms of biological role, catalyzes the conversion of dethiobiotin (DTB) to biotin by the insertion of a sulfur atom into dethiobiotin via a radical-based mechanism. This Shewanella denitrificans (strain OS217 / ATCC BAA-1090 / DSM 15013) protein is Biotin synthase.